Here is a 446-residue protein sequence, read N- to C-terminus: DNA repair protein RadA (446 aa).

Residues 10-27 (CSNCGNTSPKWSGQCFDC) form a C4-type zinc finger. 91–98 (GDPGIGKS) contributes to the ATP binding site. Residues 250–254 (KNRFG) carry the RadA KNRFG motif motif. A lon-protease-like region spans residues 349–446 (EVYLSIAGGL…HLKDLKEIIR (98 aa)).

Belongs to the RecA family. RadA subfamily.

In terms of biological role, DNA-dependent ATPase involved in processing of recombination intermediates, plays a role in repairing DNA breaks. Stimulates the branch migration of RecA-mediated strand transfer reactions, allowing the 3' invading strand to extend heteroduplex DNA faster. Binds ssDNA in the presence of ADP but not other nucleotides, has ATPase activity that is stimulated by ssDNA and various branched DNA structures, but inhibited by SSB. Does not have RecA's homology-searching function. This is DNA repair protein RadA from Rickettsia felis (strain ATCC VR-1525 / URRWXCal2) (Rickettsia azadi).